A 295-amino-acid chain; its full sequence is tRNA pseudouridine synthase B (295 aa).

Aspartate 42 functions as the Nucleophile in the catalytic mechanism.

The protein belongs to the pseudouridine synthase TruB family. Type 1 subfamily.

It carries out the reaction uridine(55) in tRNA = pseudouridine(55) in tRNA. In terms of biological role, responsible for synthesis of pseudouridine from uracil-55 in the psi GC loop of transfer RNAs. The protein is tRNA pseudouridine synthase B of Cutibacterium acnes (strain DSM 16379 / KPA171202) (Propionibacterium acnes).